The following is a 277-amino-acid chain: Large ribosomal subunit protein uL2 (277 aa).

Residues 226-277 (MNPVDHPHGGGEGRSPIGMPSPVTPWGKPTLGYKTRKPNKKSDRLIVSRRKK) are disordered.

This sequence belongs to the universal ribosomal protein uL2 family. Part of the 50S ribosomal subunit. Forms a bridge to the 30S subunit in the 70S ribosome.

In terms of biological role, one of the primary rRNA binding proteins. Required for association of the 30S and 50S subunits to form the 70S ribosome, for tRNA binding and peptide bond formation. It has been suggested to have peptidyltransferase activity; this is somewhat controversial. Makes several contacts with the 16S rRNA in the 70S ribosome. In Symbiobacterium thermophilum (strain DSM 24528 / JCM 14929 / IAM 14863 / T), this protein is Large ribosomal subunit protein uL2.